Here is a 963-residue protein sequence, read N- to C-terminus: Iron-responsive element-binding protein 2 (963 aa).

[4Fe-4S] cluster-binding residues include Cys512, Cys578, and Cys581.

Belongs to the aconitase/IPM isomerase family. Interacts with RBCK1 isoform 1 and isoform 2 only in iron-rich conditions. Interacts (when associated with the 4Fe-4S) with FBXL5. Interacts with CIAO1 and CIAO2A. [4Fe-4S] cluster is required as a cofactor. Post-translationally, ubiquitinated and degraded by the proteasome in presence of high level of iron and oxygen. Ubiquitinated by a SCF complex containing FBXL5. Upon iron and oxygen depletion FBXL5 is degraded, preventing ubiquitination and allowing its RNA-binding activity.

It localises to the cytoplasm. Its function is as follows. RNA-binding protein that binds to iron-responsive elements (IRES), which are stem-loop structures found in the 5'-UTR of ferritin, and delta aminolevulinic acid synthase mRNAs, and in the 3'-UTR of transferrin receptor mRNA. Binding to the IRE element in ferritin results in the repression of its mRNA translation. Binding of the protein to the transferrin receptor mRNA inhibits the degradation of this otherwise rapidly degraded mRNA. In Homo sapiens (Human), this protein is Iron-responsive element-binding protein 2 (IREB2).